A 141-amino-acid polypeptide reads, in one-letter code: Large ribosomal subunit protein uL11 (141 aa).

The protein belongs to the universal ribosomal protein uL11 family. Part of the ribosomal stalk of the 50S ribosomal subunit. Interacts with L10 and the large rRNA to form the base of the stalk. L10 forms an elongated spine to which L12 dimers bind in a sequential fashion forming a multimeric L10(L12)X complex. One or more lysine residues are methylated.

Its function is as follows. Forms part of the ribosomal stalk which helps the ribosome interact with GTP-bound translation factors. The sequence is that of Large ribosomal subunit protein uL11 from Limosilactobacillus reuteri (strain DSM 20016) (Lactobacillus reuteri).